The chain runs to 320 residues: Pyrroline-5-carboxylate reductase 2 (320 aa).

Residue S2 is modified to N-acetylserine. NADP(+) is bound by residues 6–11 and S34; that span reads IGAGQL. Residues A8, Q10, L11, S34, E36, N56, V70, K71, and A97 each contribute to the NADPH site. NADP(+) contacts are provided by residues N56, 69–72, and 95–97; these read AVKP and CAA. L-proline is bound at residue E164. N230 contacts NADPH. Residues A237 and T238 each coordinate L-proline. Residues 295–305 show a composition bias toward low complexity; the sequence is PTVSTLTPSSP. The disordered stretch occupies residues 295-320; the sequence is PTVSTLTPSSPGKLLTRSLALGGKKD. S304 is subject to Phosphoserine.

It belongs to the pyrroline-5-carboxylate reductase family. In terms of assembly, homodecamer; composed of 5 homodimers. Interacts with LTO1.

The protein resides in the cytoplasm. It localises to the mitochondrion. The enzyme catalyses L-proline + NADP(+) = (S)-1-pyrroline-5-carboxylate + NADPH + 2 H(+). It catalyses the reaction L-proline + NAD(+) = (S)-1-pyrroline-5-carboxylate + NADH + 2 H(+). Its pathway is amino-acid biosynthesis; L-proline biosynthesis; L-proline from L-glutamate 5-semialdehyde: step 1/1. Its function is as follows. Oxidoreductase that catalyzes the last step in proline biosynthesis, which corresponds to the reduction of pyrroline-5-carboxylate to L-proline using NAD(P)H. At physiologic concentrations, has higher specific activity in the presence of NADH. Involved in cellular response to oxidative stress. In some cell types, such as erythrocytes, its primary function may be the generation of NADP(+). The chain is Pyrroline-5-carboxylate reductase 2 (PYCR2) from Macaca fascicularis (Crab-eating macaque).